The following is a 249-amino-acid chain: Triosephosphate isomerase (249 aa).

Residues asparagine 12 and lysine 14 each contribute to the substrate site. Lysine 14 is subject to N6-acetyllysine. Tyrosine 68 bears the 3'-nitrotyrosine mark. Phosphoserine is present on serine 80. Residue histidine 96 is the Electrophile of the active site. At serine 106 the chain carries Phosphoserine. A Glycyl lysine isopeptide (Lys-Gly) (interchain with G-Cter in SUMO1) cross-link involves residue lysine 142. Lysine 149 carries the N6-succinyllysine modification. The residue at position 156 (lysine 156) is an N6-acetyllysine; alternate. N6-succinyllysine; alternate is present on lysine 156. The active-site Proton acceptor is the glutamate 166. Threonine 173 is modified (phosphothreonine). Lysine 194 bears the N6-acetyllysine; alternate mark. Position 194 is an N6-succinyllysine; alternate (lysine 194). Position 194 is an N6-methyllysine; alternate (lysine 194). Serine 198 bears the Phosphoserine mark. Residue tyrosine 209 is modified to 3'-nitrotyrosine. At serine 212 the chain carries Phosphoserine. Threonine 214 bears the Phosphothreonine mark. Residue serine 223 is modified to Phosphoserine. Lysine 238 is subject to N6-acetyllysine.

This sequence belongs to the triosephosphate isomerase family. Homodimer.

It is found in the cytoplasm. The catalysed reaction is dihydroxyacetone phosphate = methylglyoxal + phosphate. It catalyses the reaction D-glyceraldehyde 3-phosphate = dihydroxyacetone phosphate. It participates in carbohydrate degradation; glycolysis; D-glyceraldehyde 3-phosphate from glycerone phosphate: step 1/1. It functions in the pathway carbohydrate biosynthesis; gluconeogenesis. Functionally, triosephosphate isomerase is an extremely efficient metabolic enzyme that catalyzes the interconversion between dihydroxyacetone phosphate (DHAP) and D-glyceraldehyde-3-phosphate (G3P) in glycolysis and gluconeogenesis. In terms of biological role, it is also responsible for the non-negligible production of methylglyoxal a reactive cytotoxic side-product that modifies and can alter proteins, DNA and lipids. The chain is Triosephosphate isomerase (Tpi1) from Rattus norvegicus (Rat).